Consider the following 518-residue polypeptide: MVLNILLAIVGLIVGLGLGFVIAKSRHDKAINGAKISASSILENARKESETLKKEALLEAKEENQKYRSEIESELKESRLELKSQENRLIQREQTLDRKDDSLEKREGSLEEKEEKLGARQQLIDEREKEVENLINQQHQELERIASLSKEEAKSIIMKSTEEELNHELTLMVKESEQRAKEESDRKAKNLLSLAIQRCAADSVSETTVSVVTLPNDEMKGRIIGREGRNIRTLETLTGIDLIIDDTPEAVVLSGFDPIRREIARMTLEKLIQDGRIHPARIEEMVEKSRKEMDERIREYGEQAAFEVGAHTLHPDLIKILGRLRFRTSYGQNVLNHSIEVAKLAGVLAAELGEDVQLAKRAGLLHDIGKALDHEIEGSHVEIGAELAAKYKENSVVINAIASHHGDVEATSVISVLVAAADALSAARPGARSESLENYIRRLENLENISNSFEGVDSSFAVQAGREVRVMVKPEEISDLESVRLVRDIRKKIEDDLDYPGHIKVTVIRETRAVDYAK.

The helical transmembrane segment at 2–22 threads the bilayer; it reads VLNILLAIVGLIVGLGLGFVI. Residues 91-119 form a disordered region; the sequence is QREQTLDRKDDSLEKREGSLEEKEEKLGA. Positions 208-268 constitute a KH domain; the sequence is TVSVVTLPND…IRREIARMTL (61 aa). The HD domain maps to 334-427; that stretch reads VLNHSIEVAK…VAAADALSAA (94 aa).

The protein belongs to the RNase Y family.

The protein resides in the cell membrane. Endoribonuclease that initiates mRNA decay. The chain is Ribonuclease Y from Enterococcus faecalis (strain ATCC 700802 / V583).